Here is a 462-residue protein sequence, read N- to C-terminus: MSNKMWGGRFTSAPDAIMEEINASIGFDQRLYAQDIAGSKAHAKMLAAQGIVAAQDADRIAEGLDTILSEIEAGNFTFKRELEDIHMNVESRLAELIGASAGRLHTARSRNDQVATDFRLYVRDTLDALDAQLADLQRALAEKALAHAATVMPGFTHLQTAQPVTFGHHLMAYVEMVARDRGRLADARKRLNECPLGSAALAGTSFPIDRDATAKALGFDRPTANSLDAVSDRDFVMETLSAASICAVHLSRFAEEVVIWTSPSFALVKLSDKFTTGSSIMPQKRNPDAAELVRAKAGRIIGALTGILVVMKGLPLAYAKDMQEDKEGAFDAFSALSLVVAASAGMVRDIVPDEKRMEKAAGQGYSTATDLADWLVRALNIPFREAHHITGRIVGLASDRGIALHKLSLDDMQGVDARITQDVFSVLSVVRSVRSRVSYGGTAPTRVRTQAKRWLKKLGVPA.

Belongs to the lyase 1 family. Argininosuccinate lyase subfamily.

The protein resides in the cytoplasm. It carries out the reaction 2-(N(omega)-L-arginino)succinate = fumarate + L-arginine. It participates in amino-acid biosynthesis; L-arginine biosynthesis; L-arginine from L-ornithine and carbamoyl phosphate: step 3/3. This Xanthobacter autotrophicus (strain ATCC BAA-1158 / Py2) protein is Argininosuccinate lyase.